Consider the following 574-residue polypeptide: Zinc finger and BTB domain-containing protein 3 (574 aa).

The region spanning 74-142 (CDCTVMVGST…MYAGQLTLRG (69 aa)) is the BTB domain. Disordered regions lie at residues 175–277 (AEAD…SSTE) and 305–346 (SLRV…APAP). Glycyl lysine isopeptide (Lys-Gly) (interchain with G-Cter in SUMO2) cross-links involve residues K181 and K182. Positions 187–212 (NSQLPSLEFLSSTSRGTQPSLASAET) are enriched in polar residues. Low complexity predominate over residues 323–334 (PPASAPTSAPAP). Residue S362 is modified to Phosphoserine. The tract at residues 364–403 (EETDVSDEQPQGPERAFPSGGAVYGAQPSQPEAFEDPGAA) is disordered. 2 consecutive C2H2-type zinc fingers follow at residues 472–494 (PTCK…ATVH) and 500–523 (YECR…RKAH). The segment covering 526–535 (DLAKRSKPDP) has biased composition (basic and acidic residues). The disordered stretch occupies residues 526-574 (DLAKRSKPDPEVGPLLGVQPLPGSPTADRQSSSGGGPPKDFVLAPKTNI). K532 participates in a covalent cross-link: Glycyl lysine isopeptide (Lys-Gly) (interchain with G-Cter in SUMO2). S549 is modified (phosphoserine).

Its subcellular location is the nucleus. In terms of biological role, may be involved in transcriptional regulation. This Homo sapiens (Human) protein is Zinc finger and BTB domain-containing protein 3 (ZBTB3).